Reading from the N-terminus, the 372-residue chain is N-methyl-L-tryptophan oxidase (372 aa).

4–34 (DLIIIGSGSVGAAAGYYATRAGLNVLMTDAH) contributes to the FAD binding site. Position 308 is an S-8alpha-FAD cysteine (cysteine 308).

Belongs to the MSOX/MTOX family. MTOX subfamily. In terms of assembly, monomer. Requires FAD as cofactor.

The enzyme catalyses N(alpha)-methyl-L-tryptophan + O2 + H2O = L-tryptophan + formaldehyde + H2O2. In terms of biological role, catalyzes the oxidative demethylation of N-methyl-L-tryptophan. This Escherichia coli O17:K52:H18 (strain UMN026 / ExPEC) protein is N-methyl-L-tryptophan oxidase.